Here is a 219-residue protein sequence, read N- to C-terminus: Lipid transferase CIDEB (219 aa).

Thr18 is modified (phosphothreonine). The 77-residue stretch at 34-110 (PQRPFRVCDH…VLEQGQSWSP (77 aa)) folds into the CIDE-N domain.

The protein belongs to the CIDE family. Interacts with DFFA. Interacts with DFFB; inhibited by DFFB. Interacts with APOB. Interacts with PREB/SEC12; facilitating loading of SCAP-SREBP into COPII vesicles. In terms of tissue distribution, highly enriched in the liver.

The protein localises to the lipid droplet. Its subcellular location is the endoplasmic reticulum membrane. It is found in the golgi apparatus. The protein resides in the cytoplasmic vesicle. It localises to the COPI-coated vesicle. In terms of biological role, lipid transferase specifically expressed in hepatocytes, which promotes unilocular lipid droplet formation by mediating lipid droplet fusion. Lipid droplet fusion promotes their enlargement, restricting lipolysis and favoring lipid storage. Localizes on the lipid droplet surface, at focal contact sites between lipid droplets, and mediates atypical lipid droplet fusion by promoting directional net neutral lipid transfer from the smaller to larger lipid droplets. The transfer direction may be driven by the internal pressure difference between the contacting lipid droplet pair. Promotes lipid exchange and lipid droplet fusion in both small and large lipid droplet-containing hepatocytes. In addition to its role in lipid droplet fusion, also involved in cytoplasmic vesicle biogenesis and transport. Required for very-low-density lipoprotein (VLDL) lipidation and maturation. Probably involved in the biogenesis of VLDL transport vesicles by forming a COPII vesicle coat and facilitating the formation of endoplasmic reticulum-derived large vesicles. Also involved in sterol-regulated export of the SCAP-SREBP complex, composed of SCAP, SREBF1/SREBP1 and SREBF2/SREBP2, by promoting loading of SCAP-SREBP into COPII vesicles. May also activate apoptosis. This chain is Lipid transferase CIDEB, found in Mus musculus (Mouse).